A 137-amino-acid polypeptide reads, in one-letter code: Large ribosomal subunit protein uL16 (137 aa).

Belongs to the universal ribosomal protein uL16 family. Part of the 50S ribosomal subunit.

Its function is as follows. Binds 23S rRNA and is also seen to make contacts with the A and possibly P site tRNAs. The protein is Large ribosomal subunit protein uL16 of Rhodopseudomonas palustris (strain HaA2).